A 204-amino-acid chain; its full sequence is 34 kDa membrane antigen (204 aa).

A signal peptide spans 1-19 (MKRVSLLGSAAIFALVFSA). Cysteine 20 is lipidated: N-palmitoyl cysteine. A lipid anchor (S-diacylglycerol cysteine) is attached at cysteine 20.

The protein belongs to the UPF0423 family.

The protein resides in the cell membrane. In terms of biological role, this antigen is a pathogen-specific membrane immunogen. This is 34 kDa membrane antigen (tpd) from Treponema pallidum (strain Nichols).